Here is a 134-residue protein sequence, read N- to C-terminus: MKPSERRKARRLAVQAIYSWQLSGNNIADVEHEFLTEQKIDGIDVAYFRELLSGTATKQAQIDEQIIPHIERPYNEVSPIEKAVLRLATYELTFRKDVPYKVAINEAIELAKAFGAEDGHKFVNGILDKIVGRK.

Belongs to the NusB family.

Its function is as follows. Involved in transcription antitermination. Required for transcription of ribosomal RNA (rRNA) genes. Binds specifically to the boxA antiterminator sequence of the ribosomal RNA (rrn) operons. The protein is Transcription antitermination protein NusB of Shewanella sediminis (strain HAW-EB3).